Reading from the N-terminus, the 77-residue chain is UPF0248 protein Pcal_0252 (77 aa).

The protein belongs to the UPF0248 family.

In Pyrobaculum calidifontis (strain DSM 21063 / JCM 11548 / VA1), this protein is UPF0248 protein Pcal_0252.